Here is a 390-residue protein sequence, read N- to C-terminus: ATP phosphoribosyltransferase regulatory subunit (390 aa).

It belongs to the class-II aminoacyl-tRNA synthetase family. HisZ subfamily. Heteromultimer composed of HisG and HisZ subunits.

It is found in the cytoplasm. Its pathway is amino-acid biosynthesis; L-histidine biosynthesis; L-histidine from 5-phospho-alpha-D-ribose 1-diphosphate: step 1/9. Required for the first step of histidine biosynthesis. May allow the feedback regulation of ATP phosphoribosyltransferase activity by histidine. This chain is ATP phosphoribosyltransferase regulatory subunit, found in Nitrosomonas eutropha (strain DSM 101675 / C91 / Nm57).